Consider the following 256-residue polypeptide: Mannose-specific lectin 1 (256 aa).

The first 23 residues, 1–23 (MAKLLLFLLPAILGLLVPRSAVA), serve as a signal peptide directing secretion. Bulb-type lectin domains follow at residues 26-131 (TNYL…PWVR) and 145-252 (NNLL…SKRS). Residues 51 to 55 (QDDCN), Tyr59, Trp63, Gln64, 170 to 174 (QGDCN), Tyr178, and 182 to 185 (YGWQ) contribute to the beta-D-mannose site. The Carbohydrate-binding motif 1 motif lies at 51–59 (QDDCNLVLY). Intrachain disulfides connect Cys54–Cys74 and Cys173–Cys195. Residues 170–178 (QGDCNLVLY) carry the Carbohydrate-binding motif 2 motif.

As to quaternary structure, forms heterodimers.

It is found in the secreted. Mannose-specific lectin. Shows agglutinating activity towards erythrocytes from rabbit. The chain is Mannose-specific lectin 1 from Remusatia vivipara (Hitchhiker elephant ear).